The following is a 399-amino-acid chain: S-adenosylmethionine synthase (399 aa).

Residue H15 coordinates ATP. A Mg(2+)-binding site is contributed by D17. K(+) is bound at residue E43. Residues E56 and Q99 each coordinate L-methionine. The segment at 99-109 (QSADIAQGVDN) is flexible loop. ATP-binding positions include 174–176 (DGK), 244–245 (RF), D253, 259–260 (RK), A276, and K280. D253 lines the L-methionine pocket. K284 is an L-methionine binding site.

Belongs to the AdoMet synthase family. Homotetramer; dimer of dimers. The cofactor is Mg(2+). K(+) is required as a cofactor.

The protein resides in the cytoplasm. It catalyses the reaction L-methionine + ATP + H2O = S-adenosyl-L-methionine + phosphate + diphosphate. It participates in amino-acid biosynthesis; S-adenosyl-L-methionine biosynthesis; S-adenosyl-L-methionine from L-methionine: step 1/1. Its function is as follows. Catalyzes the formation of S-adenosylmethionine (AdoMet) from methionine and ATP. The overall synthetic reaction is composed of two sequential steps, AdoMet formation and the subsequent tripolyphosphate hydrolysis which occurs prior to release of AdoMet from the enzyme. The polypeptide is S-adenosylmethionine synthase (Salinispora tropica (strain ATCC BAA-916 / DSM 44818 / JCM 13857 / NBRC 105044 / CNB-440)).